The sequence spans 291 residues: MFTGSIPALVTPFRNGKFDEVVFRAHVDRMIEGGSSALVPCGTTGESATMTIEEHNYVMAVCIDQTKGRVPVIAGCGSNDTKVSLAHLRHAAKAGAAAGLVVLPYYNKPSQEGLYAHYSYLAENSPIPILIYNVPGRTSSDISVETLARLSRLPAIVGMKDASGHIARVSAQRLACGSDFCQLSGNDDMALAFNAMGGVGCISVTANVAPKLSADFQKACAENRYQDALALQDRLYPLHSALFSDSSPAPVKYALSRLYSDFSPELRLPLVQPSDHSKALVDAALSHARLI.

Thr44 serves as a coordination point for pyruvate. Tyr132 functions as the Proton donor/acceptor in the catalytic mechanism. The active-site Schiff-base intermediate with substrate is the Lys160. Ile202 provides a ligand contact to pyruvate.

The protein belongs to the DapA family. In terms of assembly, homotetramer; dimer of dimers.

It is found in the cytoplasm. The enzyme catalyses L-aspartate 4-semialdehyde + pyruvate = (2S,4S)-4-hydroxy-2,3,4,5-tetrahydrodipicolinate + H2O + H(+). The protein operates within amino-acid biosynthesis; L-lysine biosynthesis via DAP pathway; (S)-tetrahydrodipicolinate from L-aspartate: step 3/4. Functionally, catalyzes the condensation of (S)-aspartate-beta-semialdehyde [(S)-ASA] and pyruvate to 4-hydroxy-tetrahydrodipicolinate (HTPA). The chain is 4-hydroxy-tetrahydrodipicolinate synthase from Zymomonas mobilis subsp. mobilis (strain ATCC 31821 / ZM4 / CP4).